A 383-amino-acid chain; its full sequence is 2-methylcitrate synthase 2 (383 aa).

Positions 73 and 195 each coordinate substrate. His230 is a catalytic residue. 263–267 (VVMGF) provides a ligand contact to CoA. His269 is an active-site residue. Residue Arg278 coordinates substrate. The active site involves Asp320. Arg345 and Arg364 together coordinate substrate.

Belongs to the citrate synthase family. In terms of assembly, homodimer.

It catalyses the reaction propanoyl-CoA + oxaloacetate + H2O = (2S,3S)-2-methylcitrate + CoA + H(+). The catalysed reaction is oxaloacetate + acetyl-CoA + H2O = citrate + CoA + H(+). The protein operates within organic acid metabolism; propanoate degradation. It participates in carbohydrate metabolism; tricarboxylic acid cycle; isocitrate from oxaloacetate: step 1/2. Involved in the catabolism of short chain fatty acids (SCFA) via the tricarboxylic acid (TCA)(acetyl degradation route) and via the 2-methylcitrate cycle I (propionate degradation route). Catalyzes the Claisen condensation of propionyl-CoA and oxaloacetate (OAA) to yield 2-methylcitrate (2-MC) and CoA. Also catalyzes the condensation of oxaloacetate with acetyl-CoA but with a lower specificity. This chain is 2-methylcitrate synthase 2 (prpC2), found in Corynebacterium glutamicum (strain ATCC 13032 / DSM 20300 / JCM 1318 / BCRC 11384 / CCUG 27702 / LMG 3730 / NBRC 12168 / NCIMB 10025 / NRRL B-2784 / 534).